The primary structure comprises 206 residues: Ras-related protein Ral-B (206 aa).

Residue 21–29 (GSGGVGKSA) coordinates GTP. Residues 43 to 51 (YEPTKADSY) carry the Effector region motif. GTP is bound by residues 68-72 (DTAGQ), 128-131 (NKSD), and 158-160 (SAK). Residues 181–206 (MSENKDKNGRKSSKSKKSFKERCCLL) are disordered. Residue Cys-203 is modified to Cysteine methyl ester. Residue Cys-203 is the site of S-geranylgeranyl cysteine attachment. The propeptide at 204–206 (CLL) is removed in mature form.

This sequence belongs to the small GTPase superfamily. Ras family. As to quaternary structure, interacts with EXOC2/Sec5 and EXOC8/Exo84. Interacts (via effector domain) with RALBP1. Post-translationally, prenylation is essential for membrane localization. In terms of processing, the farnesylated form confers resistance to the proapoptotic and anti-anchorage-dependent growth effects of some geranylgeranyltransferase I inhibitors.

Its subcellular location is the cell membrane. The protein localises to the midbody. The catalysed reaction is GTP + H2O = GDP + phosphate + H(+). Alternates between an inactive form bound to GDP and an active form bound to GTP. Activated by a guanine nucleotide-exchange factor (GEF) and inactivated by a GTPase-activating protein (GAP). In terms of biological role, multifunctional GTPase involved in a variety of cellular processes including gene expression, cell migration, cell proliferation, oncogenic transformation and membrane trafficking. Accomplishes its multiple functions by interacting with distinct downstream effectors. Acts as a GTP sensor for GTP-dependent exocytosis of dense core vesicles. Required both to stabilize the assembly of the exocyst complex and to localize functional exocyst complexes to the leading edge of migrating cells. Required for suppression of apoptosis. In late stages of cytokinesis, upon completion of the bridge formation between dividing cells, mediates exocyst recruitment to the midbody to drive abscission. Involved in ligand-dependent receptor mediated endocytosis of the EGF and insulin receptors. This Mus musculus (Mouse) protein is Ras-related protein Ral-B (Ralb).